The chain runs to 208 residues: dITP/XTP pyrophosphatase (208 aa).

Substrate is bound at residue 11-16 (SRNWKK). Catalysis depends on D76, which acts as the Proton acceptor. D76 contacts Mg(2+). Residues S77, 158–161 (FGYD), K184, and 189–190 (HR) contribute to the substrate site.

The protein belongs to the HAM1 NTPase family. In terms of assembly, homodimer. Requires Mg(2+) as cofactor.

The enzyme catalyses XTP + H2O = XMP + diphosphate + H(+). The catalysed reaction is dITP + H2O = dIMP + diphosphate + H(+). It catalyses the reaction ITP + H2O = IMP + diphosphate + H(+). In terms of biological role, pyrophosphatase that catalyzes the hydrolysis of nucleoside triphosphates to their monophosphate derivatives, with a high preference for the non-canonical purine nucleotides XTP (xanthosine triphosphate), dITP (deoxyinosine triphosphate) and ITP. Seems to function as a house-cleaning enzyme that removes non-canonical purine nucleotides from the nucleotide pool, thus preventing their incorporation into DNA/RNA and avoiding chromosomal lesions. The chain is dITP/XTP pyrophosphatase from Mycobacterium leprae (strain TN).